Consider the following 429-residue polypeptide: Ribosomal protein uS12 methylthiotransferase RimO (429 aa).

Residues 2-118 (HNIFLLSLGC…VLRAIGAEYR (117 aa)) form the MTTase N-terminal domain. 6 residues coordinate [4Fe-4S] cluster: Cys11, Cys47, Cys81, Cys142, Cys146, and Cys149. One can recognise a Radical SAM core domain in the interval 128–357 (LTPPHYAFLK…MELQETISQE (230 aa)). The 68-residue stretch at 360–427 (REFEGNEIVV…PYDLEGEVIG (68 aa)) folds into the TRAM domain.

Belongs to the methylthiotransferase family. RimO subfamily. Requires [4Fe-4S] cluster as cofactor.

Its subcellular location is the cytoplasm. The enzyme catalyses L-aspartate(89)-[ribosomal protein uS12]-hydrogen + (sulfur carrier)-SH + AH2 + 2 S-adenosyl-L-methionine = 3-methylsulfanyl-L-aspartate(89)-[ribosomal protein uS12]-hydrogen + (sulfur carrier)-H + 5'-deoxyadenosine + L-methionine + A + S-adenosyl-L-homocysteine + 2 H(+). In terms of biological role, catalyzes the methylthiolation of an aspartic acid residue of ribosomal protein uS12. The polypeptide is Ribosomal protein uS12 methylthiotransferase RimO (Chlorobium limicola (strain DSM 245 / NBRC 103803 / 6330)).